Reading from the N-terminus, the 318-residue chain is NADH-ubiquinone oxidoreductase chain 1 (318 aa).

The next 8 membrane-spanning stretches (helical) occupy residues Leu3 to Leu23, Leu69 to Ile89, Leu100 to Gly120, Ala135 to Met155, His171 to Ala191, Phe223 to Phe243, Glu253 to Val273, and Phe293 to Gly313.

It belongs to the complex I subunit 1 family.

Its subcellular location is the mitochondrion inner membrane. The catalysed reaction is a ubiquinone + NADH + 5 H(+)(in) = a ubiquinol + NAD(+) + 4 H(+)(out). Functionally, core subunit of the mitochondrial membrane respiratory chain NADH dehydrogenase (Complex I) that is believed to belong to the minimal assembly required for catalysis. Complex I functions in the transfer of electrons from NADH to the respiratory chain. The immediate electron acceptor for the enzyme is believed to be ubiquinone. The protein is NADH-ubiquinone oxidoreductase chain 1 (MT-ND1) of Dasypus novemcinctus (Nine-banded armadillo).